The primary structure comprises 443 residues: Ribosomal protein uS12 methylthiotransferase RimO (443 aa).

The MTTase N-terminal domain occupies 5–115; the sequence is PNIGFISLGC…VMKHVHKYVP (111 aa). Cys-14, Cys-50, Cys-79, Cys-147, Cys-151, and Cys-154 together coordinate [4Fe-4S] cluster. The Radical SAM core domain occupies 133 to 374; the sequence is LTPKHYAYLK…MQVQQRISAA (242 aa). A TRAM domain is found at 377 to 443; it reads QQKVGKTLAV…ADEYDLWGTC (67 aa).

Belongs to the methylthiotransferase family. RimO subfamily. [4Fe-4S] cluster serves as cofactor.

It is found in the cytoplasm. The catalysed reaction is L-aspartate(89)-[ribosomal protein uS12]-hydrogen + (sulfur carrier)-SH + AH2 + 2 S-adenosyl-L-methionine = 3-methylsulfanyl-L-aspartate(89)-[ribosomal protein uS12]-hydrogen + (sulfur carrier)-H + 5'-deoxyadenosine + L-methionine + A + S-adenosyl-L-homocysteine + 2 H(+). Functionally, catalyzes the methylthiolation of an aspartic acid residue of ribosomal protein uS12. The protein is Ribosomal protein uS12 methylthiotransferase RimO of Actinobacillus pleuropneumoniae serotype 5b (strain L20).